The primary structure comprises 346 residues: Histidinol-phosphate aminotransferase (346 aa).

Lys209 carries the post-translational modification N6-(pyridoxal phosphate)lysine.

This sequence belongs to the class-II pyridoxal-phosphate-dependent aminotransferase family. Histidinol-phosphate aminotransferase subfamily. As to quaternary structure, homodimer. Pyridoxal 5'-phosphate serves as cofactor.

It carries out the reaction L-histidinol phosphate + 2-oxoglutarate = 3-(imidazol-4-yl)-2-oxopropyl phosphate + L-glutamate. Its pathway is amino-acid biosynthesis; L-histidine biosynthesis; L-histidine from 5-phospho-alpha-D-ribose 1-diphosphate: step 7/9. In Flavobacterium psychrophilum (strain ATCC 49511 / DSM 21280 / CIP 103535 / JIP02/86), this protein is Histidinol-phosphate aminotransferase.